We begin with the raw amino-acid sequence, 881 residues long: Mechanosensitive ion channel protein 4 (881 aa).

Residues 35-245 (FWHNDKSSKP…EEEDPFSEED (211 aa)) form a disordered region. The segment covering 56-66 (FMRRSSEKSEE) has biased composition (basic and acidic residues). Composition is skewed to polar residues over residues 73–82 (LINQFLNKQK), 100–118 (QKNT…SASP), and 206–230 (TPRS…NQGG). Over residues 234–245 (LEEEEDPFSEED) the composition is skewed to acidic residues. Transmembrane regions (helical) follow at residues 255 to 275 (ICVW…SLIC), 297 to 317 (VMVL…KLFV), 339 to 359 (KPVQ…FLFD), and 377 to 397 (VLIC…LVKV). The interval 457-501 (GPKAVSSPPQVTVGSGRLQKSPSRVGKSPVLSRSGSKKEGGEEGI) is disordered. Positions 463-478 (SPPQVTVGSGRLQKSP) are enriched in polar residues. Over residues 492–501 (SKKEGGEEGI) the composition is skewed to basic and acidic residues. A run of 2 helical transmembrane segments spans residues 643–663 (IVDV…LGIA) and 678–698 (VVFV…FVFV).

This sequence belongs to the MscS (TC 1.A.23) family.

The protein localises to the membrane. Functionally, mechanosensitive channel that opens in response to stretch forces in the membrane lipid bilayer. The polypeptide is Mechanosensitive ion channel protein 4 (MSL4) (Arabidopsis thaliana (Mouse-ear cress)).